Here is a 490-residue protein sequence, read N- to C-terminus: Cytochrome P450 90D2 (490 aa).

Residues 4–24 (AAAGWAAPAFAVAAVVIWVVL) traverse the membrane as a helical segment. Cys437 is a heme binding site.

It belongs to the cytochrome P450 family. Heme serves as cofactor. Expressed at low levels leaf blades, shoot apex and elongating stem.

It is found in the membrane. It carries out the reaction 6-deoxoteasterone + reduced [NADPH--hemoprotein reductase] + O2 = 3-dehydro-6-deoxoteasterone + oxidized [NADPH--hemoprotein reductase] + 2 H2O + H(+). Its pathway is plant hormone biosynthesis; brassinosteroid biosynthesis. Functionally, catalyzes the C6-oxidation step in brassinosteroids biosynthesis. May convert 6-deoxoteasterone (6-deoxoTE) to 3-dehydro-6-deoxoteasterone (6-deoxo3DT, 6-deoxo3DHT), and teasterone (TE) to 3-dehydroteasterone (3DT, 3-DHT). Involved in the elongation of leaf sheaths and stems. This is Cytochrome P450 90D2 from Oryza sativa subsp. japonica (Rice).